Here is a 534-residue protein sequence, read N- to C-terminus: Chaperonin GroEL, chloroplastic (534 aa).

ATP-binding positions include 29-32 (TLGP), 86-90 (DGTTT), Gly414, and Asp496.

Belongs to the chaperonin (HSP60) family. As to quaternary structure, forms a cylinder of 14 subunits composed of two heptameric rings stacked back-to-back. Interacts with the co-chaperonin GroES.

It localises to the plastid. The protein resides in the chloroplast. The catalysed reaction is ATP + H2O + a folded polypeptide = ADP + phosphate + an unfolded polypeptide.. Functionally, together with its co-chaperonin GroES, plays an essential role in assisting protein folding. The GroEL-GroES system forms a nano-cage that allows encapsulation of the non-native substrate proteins and provides a physical environment optimized to promote and accelerate protein folding. This is Chaperonin GroEL, chloroplastic from Galdieria sulphuraria (Red alga).